We begin with the raw amino-acid sequence, 239 residues long: NADH-quinone oxidoreductase chain 2 (239 aa).

[2Fe-2S] cluster contacts are provided by Cys96, Cys101, Cys137, and Cys141.

It belongs to the complex I 24 kDa subunit family. NDH-1 is composed of at least 14 different subunits, Nqo1 to Nqo14. The complex has a L-shaped structure, with the hydrophobic arm (subunits Nqo7, Nqo8, Nqo10 to Nqo14) embedded in the inner membrane and the hydrophilic peripheral arm (subunits Nqo1 to Nqo6, Nqo9) protruding into the bacterial cytoplasm. The hydrophilic domain contains all the redox centers. It depends on [2Fe-2S] cluster as a cofactor.

It is found in the cell inner membrane. It carries out the reaction a quinone + NADH + 5 H(+)(in) = a quinol + NAD(+) + 4 H(+)(out). Its function is as follows. NDH-1 shuttles electrons from NADH, via FMN and iron-sulfur (Fe-S) centers, to quinones in the respiratory chain. The immediate electron acceptor for the enzyme in this species is believed to be ubiquinone. Couples the redox reaction to proton translocation (for every two electrons transferred, four hydrogen ions are translocated across the cytoplasmic membrane), and thus conserves the redox energy in a proton gradient. The polypeptide is NADH-quinone oxidoreductase chain 2 (nqo2) (Paracoccus denitrificans).